The following is a 509-amino-acid chain: Aldehyde dehydrogenase 1A1 (509 aa).

Residues 175–178 (IPWN), 201–204 (KPAE), 234–235 (GP), 254–255 (GS), and 277–279 (ELG) each bind NAD(+). The Proton acceptor role is filled by E277. C311 functions as the Nucleophile in the catalytic mechanism. Residues 357-361 (EQFQK) and 408-410 (EIF) contribute to the NAD(+) site.

This sequence belongs to the aldehyde dehydrogenase family. Homotetramer.

Its subcellular location is the cytoplasm. It is found in the cytosol. The protein resides in the cell projection. It localises to the axon. It carries out the reaction an aldehyde + NAD(+) + H2O = a carboxylate + NADH + 2 H(+). It catalyses the reaction all-trans-retinal + NAD(+) + H2O = all-trans-retinoate + NADH + 2 H(+). The catalysed reaction is 9-cis-retinal + NAD(+) + H2O = 9-cis-retinoate + NADH + 2 H(+). The enzyme catalyses 11-cis-retinal + NAD(+) + H2O = 11-cis-retinoate + NADH + 2 H(+). It carries out the reaction 13-cis-retinal + NAD(+) + H2O = 13-cis-retinoate + NADH + 2 H(+). It catalyses the reaction 3-deoxyglucosone + NAD(+) + H2O = 2-dehydro-3-deoxy-D-gluconate + NADH + 2 H(+). The catalysed reaction is (E)-4-hydroxynon-2-enal + NAD(+) + H2O = (E)-4-hydroxynon-2-enoate + NADH + 2 H(+). The enzyme catalyses malonaldehyde + NAD(+) + H2O = 3-oxopropanoate + NADH + 2 H(+). It carries out the reaction hexanal + NAD(+) + H2O = hexanoate + NADH + 2 H(+). It catalyses the reaction propanal + NAD(+) + H2O = propanoate + NADH + 2 H(+). The catalysed reaction is acetaldehyde + NAD(+) + H2O = acetate + NADH + 2 H(+). The enzyme catalyses benzaldehyde + NAD(+) + H2O = benzoate + NADH + 2 H(+). It carries out the reaction 4-aminobutanal + NAD(+) + H2O = 4-aminobutanoate + NADH + 2 H(+). The protein operates within cofactor metabolism; retinol metabolism. Cytosolic dehydrogenase that catalyzes the irreversible oxidation of a wide range of aldehydes to their corresponding carboxylic acid. Functions downstream of retinol dehydrogenases and catalyzes the oxidation of retinaldehyde into retinoic acid, the second step in the oxidation of retinol/vitamin A into retinoic acid. This pathway is crucial to control the levels of retinol and retinoic acid, two important molecules which excess can be teratogenic and cytotoxic. Also oxidizes aldehydes resulting from lipid peroxidation like (E)-4-hydroxynon-2-enal/HNE, malonaldehyde and hexanal that form protein adducts and are highly cytotoxic. By participating for instance to the clearance of (E)-4-hydroxynon-2-enal/HNE in the lens epithelium prevents the formation of HNE-protein adducts and lens opacification. Also functions downstream of fructosamine-3-kinase in the fructosamine degradation pathway by catalyzing the oxidation of 3-deoxyglucosone, the carbohydrate product of fructosamine 3-phosphate decomposition, which is itself a potent glycating agent that may react with lysine and arginine side-chains of proteins. Also has an aminobutyraldehyde dehydrogenase activity and is probably part of an alternative pathway for the biosynthesis of GABA/4-aminobutanoate in midbrain, thereby playing a role in GABAergic synaptic transmission. The sequence is that of Aldehyde dehydrogenase 1A1 from Gallus gallus (Chicken).